The following is a 356-amino-acid chain: Carbohydrate sulfotransferase 10 (356 aa).

Residues 1–6 lie on the Cytoplasmic side of the membrane; that stretch reads MHHQWL. A helical; Signal-anchor for type II membrane protein membrane pass occupies residues 7–27; it reads LLAACFWVIFMFMVASKFITL. Residues 28–356 lie on the Lumenal side of the membrane; sequence TFKDPDVYSA…GYQKPDFLLN (329 aa). Asn-99 carries an N-linked (GlcNAc...) asparagine glycan. 3'-phosphoadenylyl sulfate contacts are provided by residues 127–133 and 189–197; these read PKVGNTQ and RDPFERLIS. N-linked (GlcNAc...) asparagine glycosylation is found at Asn-228 and Asn-316.

Belongs to the sulfotransferase 2 family. In terms of tissue distribution, in fetal tissues, it is predominantly expressed in brain, and weakly expressed in lung, kidney and liver. In adult, it is highly expressed in brain, testis, ovary, expressed at intermediate level in heart, pancreas, skeletal muscle, spleen and thymus, and weakly expressed in other tissues. In brain, it is expressed at higher level in the frontal lobe.

The protein resides in the golgi apparatus membrane. The catalysed reaction is 3-O-{beta-D-GlcA-(1-&gt;[3)-alpha-D-Xyl-(1-&gt;3)-beta-D-GlcA-(1-&gt;](n)-4)-beta-D-Xyl-(1-&gt;4)-Rib-ol-P-Rib-ol-P-3-beta-D-GalNAc-(1-&gt;3)-beta-D-GlcNAc-(1-&gt;4)-O-6-P-alpha-D-Man}-L-Thr-[protein] + 3'-phosphoadenylyl sulfate = 3-O-{O-3-S-beta-D-GlcA-(1-&gt;[3)-alpha-D-Xyl-(1-&gt;3)-beta-D-GlcA-(1-&gt;](n)-4)-beta-D-Xyl-(1-&gt;4)-Rib-ol-P-Rib-ol-P-3-beta-D-GalNAc-(1-&gt;3)-beta-D-GlcNAc-(1-&gt;4)-O-6-P-alpha-D-Man}-L-Thr-[protein] + adenosine 3',5'-bisphosphate + H(+). It catalyses the reaction 17beta-estradiol 3-O-(beta-D-glucuronate) + 3'-phosphoadenylyl sulfate = 17beta-estradiol 3-O-(3-sulfo-beta-D-glucuronate) + adenosine 3',5'-bisphosphate + H(+). The enzyme catalyses 17beta-estradiol 3-O-(beta-D-glucuronate) 17-sulfate + 3'-phosphoadenylyl sulfate = 17beta-estradiol 3-O-(3-sulfo-beta-D-glucuronate) 17-sulfate + adenosine 3',5'-bisphosphate + H(+). It carries out the reaction 17beta-estradiol 17-O-(beta-D-glucuronate) + 3'-phosphoadenylyl sulfate = 17beta-estradiol 17-O-(3-sulfo-beta-D-glucuronate) + adenosine 3',5'-bisphosphate + H(+). The catalysed reaction is 16alpha,17beta-estriol 3-O-(beta-D-glucuronate) + 3'-phosphoadenylyl sulfate = 16alpha,17beta-estriol 3-O-(3-sulfo-beta-D-glucuronate) + adenosine 3',5'-bisphosphate + H(+). It catalyses the reaction 16alpha,17beta-estriol 16-O-(beta-D-glucuronate) + 3'-phosphoadenylyl sulfate = 16alpha,17beta-estriol 16-O-(3-sulfo-beta-D-glucuronate) + adenosine 3',5'-bisphosphate + H(+). The enzyme catalyses 16alpha,17beta-estriol 17-O-(beta-D-glucuronate) + 3'-phosphoadenylyl sulfate = 16alpha,17beta-estriol 17-O-(3-sulfo-beta-D-glucuronate) + adenosine 3',5'-bisphosphate + H(+). It carries out the reaction estrone 3-O-(beta-D-glucuronate) + 3'-phosphoadenylyl sulfate = estrone 3-O-(3-sulfo-beta-D-glucuronate) + adenosine 3',5'-bisphosphate + H(+). The catalysed reaction is 3alpha,20alpha-dihydroxy-5beta-pregnane 3-O-(beta-D-glucuronate) + 3'-phosphoadenylyl sulfate = 3alpha,20alpha-dihydroxy-5beta-pregnane 3-O-(3-sulfo-beta-D-glucuronate) + adenosine 3',5'-bisphosphate + H(+). It catalyses the reaction testosterone 17-O-(beta-D-glucuronate) + 3'-phosphoadenylyl sulfate = testosterone 17-O-(3-sulfo-beta-D-glucuronate) + adenosine 3',5'-bisphosphate + H(+). The enzyme catalyses 3beta-androst-5-en-17-one 3-O-(beta-D-glucuronate) + 3'-phosphoadenylyl sulfate = 3beta-androst-5-en-17-one 3-O-(3-sulfo-beta-D-glucuronate) + adenosine 3',5'-bisphosphate + H(+). It carries out the reaction 3alpha,17alpha-dihydroxy-5beta-androstane-11-one-17beta-carboxylate 3-O-(beta-D-glucuronate) + 3'-phosphoadenylyl sulfate = 3alpha,17alpha-dihydroxy-5beta-androstane-11-one-17beta-carboxylate 3-O-(3-sulfo-beta-D-glucuronate) + adenosine 3',5'-bisphosphate + H(+). The catalysed reaction is 3alpha-hydroxyetiocholan-17-one 3-O-(beta-D-glucuronate) + 3'-phosphoadenylyl sulfate = 3alpha-hydroxyetiocholan-17-one 3-O-(3-sulfo-beta-D-glucuronate) + adenosine 3',5'-bisphosphate + H(+). The protein operates within steroid metabolism. Its pathway is protein modification; carbohydrate sulfation. Its function is as follows. Catalyzes the transfer of sulfate from 3'-phosphoadenylyl sulfate (PAPS) to position 3 of terminal glucuronic acid of both protein- and lipid-linked oligosaccharides. Participates in biosynthesis of HNK-1 carbohydrate structure 3-O-sulfo-beta-D-GlcA-(1-&gt;3)-beta-D-Gal-(1-&gt;4)-D-GlcNAc-R, a sulfated glucuronyl-lactosaminyl residue carried by many neural recognition molecules, which is involved in cell interactions during ontogenetic development and in synaptic plasticity in the adult. May be indirectly involved in synapse plasticity of the hippocampus, via its role in HNK-1 biosynthesis. Sulfates terminal glucuronyl residue of the laminin globular (LG)-domain binding epitope on DAG1/alpha-dystroglycan and prevents further polymerization by LARGE1 glycosyltransferase. Likely defines the chain length of LG epitope, conferring binding specificity to extracellular matrix components. Plays a role in down-regulating the steroid hormones. Sulfates glucuronidated estrogens and androgens with an impact in hormone cycle and fertility. Has a preference for glucuronyl moiety at the 3-hydroxyl group of a sterol ring rather than the 17-hydroxyl group, showing high catalytic efficiency for 17beta-estradiol 3-O-(beta-D-glucuronate) and dehydroepiandrosterone 3-O-(beta-D-glucuronate) hormones. This is Carbohydrate sulfotransferase 10 from Homo sapiens (Human).